Consider the following 396-residue polypeptide: Putative nickel insertion protein (396 aa).

The protein belongs to the LarC family.

This Methanosarcina barkeri (strain Fusaro / DSM 804) protein is Putative nickel insertion protein.